Consider the following 126-residue polypeptide: H2B.U histone 2 (126 aa).

The interval 1–35 (MPEPSRSTPAPKKGSKKAITKAQKKDGKKRKRGRK) is disordered. Pro-2 carries the post-translational modification N-acetylproline. Glu-3 is modified (ADP-ribosyl glutamic acid). Residue Ser-7 is modified to ADP-ribosylserine. Lys-12 carries the N6-(beta-hydroxybutyryl)lysine; alternate modification. 2 positions are modified to N6-acetyllysine; alternate: Lys-12 and Lys-13. An N6-crotonyllysine; alternate mark is found at Lys-12 and Lys-13. An N6-lactoyllysine; alternate modification is found at Lys-12. At Lys-13 the chain carries N6-(2-hydroxyisobutyryl)lysine; alternate. Ser-15 is modified (phosphoserine; by STK4/MST1). 4 positions are modified to N6-acetyllysine; alternate: Lys-16, Lys-17, Lys-21, and Lys-24. 4 positions are modified to N6-crotonyllysine; alternate: Lys-16, Lys-17, Lys-21, and Lys-24. An N6-lactoyllysine; alternate mark is found at Lys-16, Lys-17, Lys-21, and Lys-24. N6-glutaryllysine; alternate is present on Lys-17. The residue at position 21 (Lys-21) is an N6-(beta-hydroxybutyryl)lysine; alternate. N6-(2-hydroxyisobutyryl)lysine; alternate occurs at positions 21 and 24. Lys-21 is modified (N6-butyryllysine; alternate). Residue Lys-21 forms a Glycyl lysine isopeptide (Lys-Gly) (interchain with G-Cter in SUMO2); alternate linkage. N6-(2-hydroxyisobutyryl)lysine is present on Lys-25. Lys-35 is subject to N6-(beta-hydroxybutyryl)lysine; alternate. At Lys-35 the chain carries N6-crotonyllysine; alternate. Residue Lys-35 is modified to N6-(2-hydroxyisobutyryl)lysine; alternate. At Lys-35 the chain carries N6-glutaryllysine; alternate. Position 35 is an N6-succinyllysine; alternate (Lys-35). Lys-35 participates in a covalent cross-link: Glycyl lysine isopeptide (Lys-Gly) (interchain with G-Cter in ubiquitin); alternate. PolyADP-ribosyl glutamic acid is present on Glu-36. Position 37 is a phosphoserine; by AMPK (Ser-37). Lys-44 carries the N6-lactoyllysine; alternate modification. Residues Lys-44, Lys-47, and Lys-58 each carry the N6-(2-hydroxyisobutyryl)lysine; alternate modification. Lys-44 and Lys-47 each carry N6-glutaryllysine; alternate. N6-methyllysine; alternate is present on Lys-47. At Lys-58 the chain carries N6,N6-dimethyllysine; alternate. Arg-80 bears the Dimethylated arginine mark. N6-acetyllysine; alternate is present on Lys-86. At Lys-86 the chain carries N6-lactoyllysine; alternate. Residue Lys-86 is modified to N6-(2-hydroxyisobutyryl)lysine; alternate. Lys-86 carries the post-translational modification N6,N6,N6-trimethyllysine; alternate. Omega-N-methylarginine occurs at positions 87 and 93. N6-(beta-hydroxybutyryl)lysine; alternate is present on Lys-109. N6-lactoyllysine; alternate is present on Lys-109. Lys-109 carries the post-translational modification N6-(2-hydroxyisobutyryl)lysine; alternate. Lys-109 bears the N6-glutaryllysine; alternate mark. Lys-109 is subject to N6-methyllysine; alternate. A glycan (O-linked (GlcNAc) serine) is linked at Ser-113. Thr-116 bears the Phosphothreonine mark. Lys-117 is modified (N6-(beta-hydroxybutyryl)lysine; alternate). N6-lactoyllysine; alternate occurs at positions 117 and 121. 2 positions are modified to N6-(2-hydroxyisobutyryl)lysine; alternate: Lys-117 and Lys-121. Residues Lys-117 and Lys-121 each carry the N6-glutaryllysine; alternate modification. Residues Lys-117 and Lys-121 each carry the N6-succinyllysine; alternate modification. Position 117 is an N6-methylated lysine; alternate (Lys-117). A Glycyl lysine isopeptide (Lys-Gly) (interchain with G-Cter in ubiquitin); alternate cross-link involves residue Lys-121.

The protein belongs to the histone H2B family. In terms of assembly, the nucleosome is a histone octamer containing two molecules each of H2A, H2B, H3 and H4 assembled in one H3-H4 heterotetramer and two H2A-H2B heterodimers. The octamer wraps approximately 147 bp of DNA. Monoubiquitination at Lys-35 (H2BK34Ub) by the MSL1/MSL2 dimer is required for histone H3 'Lys-4' (H3K4me) and 'Lys-79' (H3K79me) methylation and transcription activation at specific gene loci, such as HOXA9 and MEIS1 loci. Similarly, monoubiquitination at Lys-121 (H2BK120Ub) by the RNF20/40 complex gives a specific tag for epigenetic transcriptional activation and is also prerequisite for histone H3 'Lys-4' and 'Lys-79' methylation. It also functions cooperatively with the FACT dimer to stimulate elongation by RNA polymerase II. H2BK120Ub also acts as a regulator of mRNA splicing: deubiquitination by USP49 is required for efficient cotranscriptional splicing of a large set of exons. In terms of processing, phosphorylated on Ser-15 (H2BS14ph) by STK4/MST1 during apoptosis; which facilitates apoptotic chromatin condensation. Also phosphorylated on Ser-15 in response to DNA double strand breaks (DSBs), and in correlation with somatic hypermutation and immunoglobulin class-switch recombination. Phosphorylation at Ser-37 (H2BS36ph) by AMPK in response to stress promotes transcription. Post-translationally, glcNAcylation at Ser-113 promotes monoubiquitination of Lys-121. It fluctuates in response to extracellular glucose, and associates with transcribed genes. ADP-ribosylated by PARP1 or PARP2 on Ser-7 (H2BS6ADPr) in response to DNA damage. H2BS6ADPr promotes recruitment of CHD1L. Mono-ADP-ribosylated on Glu-3 (H2BE2ADPr) by PARP3 in response to single-strand breaks. Poly ADP-ribosylation on Glu-36 (H2BE35ADPr) by PARP1 regulates adipogenesis: it inhibits phosphorylation at Ser-37 (H2BS36ph), thereby blocking expression of pro-adipogenetic genes. In terms of processing, crotonylation (Kcr) is specifically present in male germ cells and marks testis-specific genes in post-meiotic cells, including X-linked genes that escape sex chromosome inactivation in haploid cells. Crotonylation marks active promoters and enhancers and confers resistance to transcriptional repressors. It is also associated with post-meiotically activated genes on autosomes. Post-translationally, hydroxybutyrylation of histones is induced by starvation. Lactylated in macrophages by EP300/P300 by using lactoyl-CoA directly derived from endogenous or exogenous lactate, leading to stimulates gene transcription.

It is found in the nucleus. The protein localises to the chromosome. Its function is as follows. Core component of nucleosome. Nucleosomes wrap and compact DNA into chromatin, limiting DNA accessibility to the cellular machineries which require DNA as a template. Histones thereby play a central role in transcription regulation, DNA repair, DNA replication and chromosomal stability. DNA accessibility is regulated via a complex set of post-translational modifications of histones, also called histone code, and nucleosome remodeling. This Mus musculus (Mouse) protein is H2B.U histone 2.